The chain runs to 320 residues: Glycerol-3-phosphate dehydrogenase [NAD(P)+] (320 aa).

4 residues coordinate NADPH: serine 14, phenylalanine 15, arginine 35, and lysine 109. Sn-glycerol 3-phosphate is bound by residues lysine 109 and glycine 137. Alanine 141 is an NADPH binding site. Sn-glycerol 3-phosphate contacts are provided by lysine 192, aspartate 248, serine 258, arginine 259, and asparagine 260. The active-site Proton acceptor is lysine 192. Arginine 259 contacts NADPH. Residues leucine 283 and glutamate 285 each contribute to the NADPH site.

This sequence belongs to the NAD-dependent glycerol-3-phosphate dehydrogenase family.

The protein resides in the cytoplasm. The enzyme catalyses sn-glycerol 3-phosphate + NAD(+) = dihydroxyacetone phosphate + NADH + H(+). It catalyses the reaction sn-glycerol 3-phosphate + NADP(+) = dihydroxyacetone phosphate + NADPH + H(+). The protein operates within membrane lipid metabolism; glycerophospholipid metabolism. Catalyzes the reduction of the glycolytic intermediate dihydroxyacetone phosphate (DHAP) to sn-glycerol 3-phosphate (G3P), the key precursor for phospholipid synthesis. In Rickettsia typhi (strain ATCC VR-144 / Wilmington), this protein is Glycerol-3-phosphate dehydrogenase [NAD(P)+].